The chain runs to 241 residues: Uracil-DNA glycosylase (241 aa).

D71 functions as the Proton acceptor in the catalytic mechanism.

The protein belongs to the uracil-DNA glycosylase (UDG) superfamily. UNG family.

It localises to the cytoplasm. The enzyme catalyses Hydrolyzes single-stranded DNA or mismatched double-stranded DNA and polynucleotides, releasing free uracil.. Excises uracil residues from the DNA which can arise as a result of misincorporation of dUMP residues by DNA polymerase or due to deamination of cytosine. The chain is Uracil-DNA glycosylase from Xanthomonas axonopodis pv. citri (strain 306).